We begin with the raw amino-acid sequence, 156 residues long: MKCRLIATGERAPAWVAQGFAEYQKRLSHWMPLELVEIEPGLRGKGRDAQRAIDDEGRRVLAALPKNAHVVALDVPGRPLSSEQLAQRMEHWRGQGRDLAFLIGGPEGHAADVVKSANESWSIGPLTLPHMLVRLIVAEQLYRAAAMLANHPYHRA.

Residues Leu73, Gly104, and 123-128 each bind S-adenosyl-L-methionine; that span reads IGPLTL.

Belongs to the RNA methyltransferase RlmH family. In terms of assembly, homodimer.

The protein localises to the cytoplasm. It carries out the reaction pseudouridine(1915) in 23S rRNA + S-adenosyl-L-methionine = N(3)-methylpseudouridine(1915) in 23S rRNA + S-adenosyl-L-homocysteine + H(+). In terms of biological role, specifically methylates the pseudouridine at position 1915 (m3Psi1915) in 23S rRNA. The protein is Ribosomal RNA large subunit methyltransferase H of Xanthomonas campestris pv. campestris (strain 8004).